Consider the following 313-residue polypeptide: Aspartate carbamoyltransferase catalytic subunit (313 aa).

2 residues coordinate carbamoyl phosphate: arginine 61 and threonine 62. Residue lysine 89 participates in L-aspartate binding. The carbamoyl phosphate site is built by arginine 111, histidine 139, and glutamine 142. Residues arginine 172 and arginine 227 each coordinate L-aspartate. The carbamoyl phosphate site is built by glycine 268 and proline 269.

Belongs to the aspartate/ornithine carbamoyltransferase superfamily. ATCase family. In terms of assembly, heterododecamer (2C3:3R2) of six catalytic PyrB chains organized as two trimers (C3), and six regulatory PyrI chains organized as three dimers (R2).

It catalyses the reaction carbamoyl phosphate + L-aspartate = N-carbamoyl-L-aspartate + phosphate + H(+). It participates in pyrimidine metabolism; UMP biosynthesis via de novo pathway; (S)-dihydroorotate from bicarbonate: step 2/3. Its function is as follows. Catalyzes the condensation of carbamoyl phosphate and aspartate to form carbamoyl aspartate and inorganic phosphate, the committed step in the de novo pyrimidine nucleotide biosynthesis pathway. The chain is Aspartate carbamoyltransferase catalytic subunit from Gluconobacter oxydans (strain 621H) (Gluconobacter suboxydans).